Here is a 461-residue protein sequence, read N- to C-terminus: Trimethylamine monooxygenase (461 aa).

Residues Ser14, Glu39, Lys40, Gln41, Met47, Trp48, and His64 each coordinate FAD. Trp72 and Asn74 together coordinate NADP(+). The FAD site is built by Asn74 and Ala127. The NADP(+) site is built by Ser206, Ser207, Ser209, Arg230, and Thr231. 2 residues coordinate FAD: Gln319 and Thr322. Arg413 provides a ligand contact to NADP(+).

The protein belongs to the FMO family. FAD serves as cofactor.

The enzyme catalyses trimethylamine + NADPH + O2 = trimethylamine N-oxide + NADP(+) + H2O. Its function is as follows. Catalyzes the oxidation of trimethylamine (TMA) to produce trimethylamine N-oxide (TMAO). The produced TMAO is accumulated in the cell, functioning as a piezolyte, improving both growth and survival at high hydrostatic pressure (HHP). The protein is Trimethylamine monooxygenase of Myroides profundi.